A 522-amino-acid chain; its full sequence is Protein nucleotidyltransferase YdiU (522 aa).

8 residues coordinate ATP: G109, G111, R112, K132, D144, G145, R195, and R202. The Proton acceptor role is filled by D271. Mg(2+) contacts are provided by N272 and D281. Residue D281 participates in ATP binding.

The protein belongs to the SELO family. Mg(2+) serves as cofactor. The cofactor is Mn(2+).

The catalysed reaction is L-seryl-[protein] + ATP = 3-O-(5'-adenylyl)-L-seryl-[protein] + diphosphate. It catalyses the reaction L-threonyl-[protein] + ATP = 3-O-(5'-adenylyl)-L-threonyl-[protein] + diphosphate. The enzyme catalyses L-tyrosyl-[protein] + ATP = O-(5'-adenylyl)-L-tyrosyl-[protein] + diphosphate. It carries out the reaction L-histidyl-[protein] + UTP = N(tele)-(5'-uridylyl)-L-histidyl-[protein] + diphosphate. The catalysed reaction is L-seryl-[protein] + UTP = O-(5'-uridylyl)-L-seryl-[protein] + diphosphate. It catalyses the reaction L-tyrosyl-[protein] + UTP = O-(5'-uridylyl)-L-tyrosyl-[protein] + diphosphate. Functionally, nucleotidyltransferase involved in the post-translational modification of proteins. It can catalyze the addition of adenosine monophosphate (AMP) or uridine monophosphate (UMP) to a protein, resulting in modifications known as AMPylation and UMPylation. This chain is Protein nucleotidyltransferase YdiU, found in Burkholderia lata (strain ATCC 17760 / DSM 23089 / LMG 22485 / NCIMB 9086 / R18194 / 383).